The chain runs to 264 residues: Nuclear egress protein 1 (264 aa).

Basic residues predominate over residues 1–12; the sequence is MTVHKSRIRRSR. A disordered region spans residues 1–22; it reads MTVHKSRIRRSRSLSVTHRIQK. The segment at 83 to 187 adopts a CCCH-type zinc-finger fold; the sequence is CLEFSPYANE…HIVFQSRTLH (105 aa).

Belongs to the herpesviridae NEC1 protein family. As to quaternary structure, forms a heterohexameric complex with NEC2. Interacts with capsid vertex specific component 2/CVC2; this interaction directs the capsid to the host inner nuclear membrane to initiate budding. Phosphorylated at serine residues in the N-terminus. This phosphorylation regulates the localization within the inner nuclear membrane.

The protein resides in the host nucleus inner membrane. In terms of biological role, plays an essential role in virion nuclear egress, the first step of virion release from infected cell. Within the host nucleus, NEC1 interacts with the newly formed capsid through the vertexes and directs it to the inner nuclear membrane by associating with NEC2. Induces the budding of the capsid at the inner nuclear membrane as well as its envelopment into the perinuclear space. There, the NEC1/NEC2 complex promotes the fusion of the enveloped capsid with the outer nuclear membrane and the subsequent release of the viral capsid into the cytoplasm where it will reach the secondary budding sites in the host Golgi or trans-Golgi network. This chain is Nuclear egress protein 1, found in Human herpesvirus 6A (strain Uganda-1102) (HHV-6 variant A).